Reading from the N-terminus, the 48-residue chain is MVITSGNDEDRGGQEKESKEESVLAMLGIIGTILNLIVIIFVYIYTTL.

Residues 1–20 form a disordered region; the sequence is MVITSGNDEDRGGQEKESKE. Residues 8 to 20 are compositionally biased toward basic and acidic residues; the sequence is DEDRGGQEKESKE. Residues 24–44 traverse the membrane as a helical segment; the sequence is LAMLGIIGTILNLIVIIFVYI.

Interacts with ATPase ATP2A2/SERCA2. Interacts with ATPase ATP2A3/SERCA3; the interaction occurs at low levels in low glucose conditions and is increased by high glucose levels. As to expression, in the adult, expressed in Purkinje cells in the cerebellum, in motor neurons and interneurons in the spinal cord and in neurons of the cortex, hippocampus and thalamus (at protein level). Also detected in the developing cortex, hippocampus and thalamus at embryonic day E15.5 (at protein level).

The protein localises to the endoplasmic reticulum membrane. The protein resides in the extracellular vesicle membrane. In neurons, plays a role in the regulation of intracellular Ca(2+), possibly by acting as an activator of ATP2A2/SERCA2, thus increasing the efficiency with which Ca(2+) is removed from the cytoplasm. Inhibits differentiation of embryonic stem cells into neurons and inhibits neurite outgrowth, likely as a result of its role in intracellular Ca(2+) regulation. In pancreatic beta cells, lowers Ca(2+) levels in the endoplasmic reticulum and enhances glucose-stimulated insulin secretion. This is Protein TUNAR from Mus musculus (Mouse).